A 98-amino-acid chain; its full sequence is NADH-ubiquinone oxidoreductase chain 4L (98 aa).

Helical transmembrane passes span 1–21, 29–49, and 61–81; these read MTMVYANIFLAFITSLMGLLM, SLLCLEGMMLSLFVMMTVTIL, and IILLVFAACEAALGLSLLVMV.

This sequence belongs to the complex I subunit 4L family. In terms of assembly, core subunit of respiratory chain NADH dehydrogenase (Complex I) which is composed of 45 different subunits.

It localises to the mitochondrion inner membrane. It carries out the reaction a ubiquinone + NADH + 5 H(+)(in) = a ubiquinol + NAD(+) + 4 H(+)(out). Its function is as follows. Core subunit of the mitochondrial membrane respiratory chain NADH dehydrogenase (Complex I) which catalyzes electron transfer from NADH through the respiratory chain, using ubiquinone as an electron acceptor. Part of the enzyme membrane arm which is embedded in the lipid bilayer and involved in proton translocation. This Leptonychotes weddellii (Weddell seal) protein is NADH-ubiquinone oxidoreductase chain 4L (MT-ND4L).